Reading from the N-terminus, the 37-residue chain is VFIDVSCSVSKECWAPCKAAVGTDRGKCMGKKCRCYX.

Cystine bridges form between cysteine 7–cysteine 28, cysteine 13–cysteine 33, and cysteine 17–cysteine 35.

This sequence belongs to the short scorpion toxin superfamily. Potassium channel inhibitor family. Alpha-KTx 01 subfamily. In terms of tissue distribution, expressed by the venom gland.

The protein localises to the secreted. Blocks selectively the high conductance calcium-activated (maxi-K) potassium channels. The sequence is that of Potassium channel toxin alpha-KTx 1.4 from Centruroides limbatus (Bark scorpion).